Consider the following 88-residue polypeptide: Homeobox protein knotted-1-like 11 (88 aa).

The ELK domain maps to Glu-4 to Phe-24. Residues Leu-25 to Ser-88 constitute a DNA-binding region (homeobox; TALE-type).

It belongs to the TALE/KNOX homeobox family.

It localises to the nucleus. Probably binds to the DNA sequence 5'-TGAC-3'. In Zea mays (Maize), this protein is Homeobox protein knotted-1-like 11 (KNOX11).